The following is a 252-amino-acid chain: 5-oxoprolinase subunit A (252 aa).

Belongs to the LamB/PxpA family. Forms a complex composed of PxpA, PxpB and PxpC.

It carries out the reaction 5-oxo-L-proline + ATP + 2 H2O = L-glutamate + ADP + phosphate + H(+). Catalyzes the cleavage of 5-oxoproline to form L-glutamate coupled to the hydrolysis of ATP to ADP and inorganic phosphate. This is 5-oxoprolinase subunit A from Mycobacterium avium (strain 104).